The following is a 636-amino-acid chain: Chaperone protein DnaK (636 aa).

Positions 579–636 are disordered; sequence ELYKNAAPPPGADGQQGADGQQGADGQQGADGQQGADGQQGADGQTTESSSNDETKTN. Low complexity predominate over residues 590–623; sequence ADGQQGADGQQGADGQQGADGQQGADGQQGADGQ.

It belongs to the heat shock protein 70 family.

Acts as a chaperone. This Nitrosopumilus maritimus (strain SCM1) protein is Chaperone protein DnaK.